A 298-amino-acid polypeptide reads, in one-letter code: Probable endonuclease 4 (298 aa).

9 residues coordinate Zn(2+): histidine 69, histidine 110, glutamate 145, aspartate 179, histidine 182, histidine 214, aspartate 227, histidine 229, and glutamate 259.

It belongs to the AP endonuclease 2 family. It depends on Zn(2+) as a cofactor.

The enzyme catalyses Endonucleolytic cleavage to 5'-phosphooligonucleotide end-products.. Functionally, endonuclease IV plays a role in DNA repair. It cleaves phosphodiester bonds at apurinic or apyrimidinic (AP) sites, generating a 3'-hydroxyl group and a 5'-terminal sugar phosphate. The chain is Probable endonuclease 4 from Geobacillus sp. (strain WCH70).